A 299-amino-acid polypeptide reads, in one-letter code: Myozenin-1 (299 aa).

The tract at residues methionine 1–leucine 34 is disordered. Serine 82 bears the Phosphoserine mark. Positions glycine 102–glutamate 174 are disordered. 2 stretches are compositionally biased toward gly residues: residues glycine 112 to glycine 125 and serine 137 to glycine 173.

This sequence belongs to the myozenin family. As to quaternary structure, interacts with ACTN2, ACTN3, FLNA, FLNB, FLNC, LDB3, PPP3CA and TCAP. Interacts via its C-terminal region with MYOT. As to expression, expressed primarily in skeletal muscle. Detected at lower levels in heart, prostate and pancreas.

It localises to the nucleus. It is found in the cell projection. The protein resides in the pseudopodium. Functionally, myozenins may serve as intracellular binding proteins involved in linking Z-disk proteins such as alpha-actinin, gamma-filamin, TCAP/telethonin, LDB3/ZASP and localizing calcineurin signaling to the sarcomere. Plays an important role in the modulation of calcineurin signaling. May play a role in myofibrillogenesis. In Homo sapiens (Human), this protein is Myozenin-1.